The primary structure comprises 220 residues: Deoxyribose-phosphate aldolase (220 aa).

The active-site Proton donor/acceptor is the aspartate 89. Catalysis depends on lysine 151, which acts as the Schiff-base intermediate with acetaldehyde. Lysine 180 serves as the catalytic Proton donor/acceptor.

It belongs to the DeoC/FbaB aldolase family. DeoC type 1 subfamily.

It localises to the cytoplasm. The enzyme catalyses 2-deoxy-D-ribose 5-phosphate = D-glyceraldehyde 3-phosphate + acetaldehyde. It functions in the pathway carbohydrate degradation; 2-deoxy-D-ribose 1-phosphate degradation; D-glyceraldehyde 3-phosphate and acetaldehyde from 2-deoxy-alpha-D-ribose 1-phosphate: step 2/2. Functionally, catalyzes a reversible aldol reaction between acetaldehyde and D-glyceraldehyde 3-phosphate to generate 2-deoxy-D-ribose 5-phosphate. The chain is Deoxyribose-phosphate aldolase from Streptococcus pneumoniae serotype 19F (strain G54).